Here is a 388-residue protein sequence, read N- to C-terminus: LL-diaminopimelate aminotransferase (388 aa).

Tyr-13, Gly-38, Lys-102, Tyr-126, and Asn-176 together coordinate substrate. Residues Ser-101–Lys-102, Tyr-126, Asn-176, Tyr-207, and Ser-235–Ser-237 each bind pyridoxal 5'-phosphate. Lys-238 is modified (N6-(pyridoxal phosphate)lysine). Arg-246 is a binding site for pyridoxal 5'-phosphate. Arg-364 is a substrate binding site.

This sequence belongs to the class-I pyridoxal-phosphate-dependent aminotransferase family. LL-diaminopimelate aminotransferase subfamily. In terms of assembly, homodimer. It depends on pyridoxal 5'-phosphate as a cofactor.

It catalyses the reaction (2S,6S)-2,6-diaminopimelate + 2-oxoglutarate = (S)-2,3,4,5-tetrahydrodipicolinate + L-glutamate + H2O + H(+). Its pathway is amino-acid biosynthesis; L-lysine biosynthesis via DAP pathway; LL-2,6-diaminopimelate from (S)-tetrahydrodipicolinate (aminotransferase route): step 1/1. Its function is as follows. Involved in the synthesis of meso-diaminopimelate (m-DAP or DL-DAP), required for both lysine and peptidoglycan biosynthesis. Catalyzes the direct conversion of tetrahydrodipicolinate to LL-diaminopimelate. The sequence is that of LL-diaminopimelate aminotransferase from Dehalococcoides mccartyi (strain CBDB1).